The chain runs to 317 residues: tRNA dimethylallyltransferase (317 aa).

ATP is bound at residue 14–21; the sequence is GPTAVGKT. 16–21 contributes to the substrate binding site; it reads TAVGKT. Residues 39–42 form an interaction with substrate tRNA region; sequence DSMQ.

This sequence belongs to the IPP transferase family. Monomer. The cofactor is Mg(2+).

It carries out the reaction adenosine(37) in tRNA + dimethylallyl diphosphate = N(6)-dimethylallyladenosine(37) in tRNA + diphosphate. Its function is as follows. Catalyzes the transfer of a dimethylallyl group onto the adenine at position 37 in tRNAs that read codons beginning with uridine, leading to the formation of N6-(dimethylallyl)adenosine (i(6)A). The sequence is that of tRNA dimethylallyltransferase from Bacillus cereus (strain B4264).